The primary structure comprises 668 residues: MKHYSIQPANLEFNAEGTPVSRDFDDVYFSNDNGLEETRYVFLGGNQLEVRFPEHPHPLFVVAESGFGTGLNFLTLWQAFDQFREAHPQARLQRLHFISFEKFPLTRADLALAHQHWPELAPWAEQLQAQWPMPLPGCHRLLLDEGRVTLDLWFGDINELTSQLDDSLNQKVDAWFLDGFAPAKNPDMWTQNLFNAMARLARPGGTLATFTSAGFVRRGLQEAGFTMQKRKGFGRKREMLCGVMEQTLPLPCSAPWFNRTGSSKREAAIIGGGIASALLSLALLRRGWQVTLYCADEAPALGASGNRQGALYPLLSKHDEALNRFFSNAFTFARRFYDQLPVKFDHDWCGVTQLGWDEKSQHKIAQMLSMDLPAELAVAVEANAVEQITGVATNCSGITYPQGGWLCPAELTRNVLELAQQQGLQIYYQYQLQNLSRKDDCWLLNFAGDQQATHSVVVLANGHQISRFSQTSTLPVYSVAGQVSHIPTTPELAELKQVLCYDGYLTPQNPANQHHCIGASYHRGSEDTAYSEDDQQQNRQRLIDCFPQAQWAKEVDVSDKEARCGVRCATRDHLPMVGNVPDYEATLVEYASLAEQKDEAVSAPVFDDLFMFAALGSRGLCSAPLCAEILAAQMSDEPIPMDASTLAALNPNRLWVRKLLKGKAVKAG.

The segment at Met1 to Glu245 is tRNA (mnm(5)s(2)U34)-methyltransferase. The FAD-dependent cmnm(5)s(2)U34 oxidoreductase stretch occupies residues Ile270 to Gly668.

In the N-terminal section; belongs to the methyltransferase superfamily. tRNA (mnm(5)s(2)U34)-methyltransferase family. The protein in the C-terminal section; belongs to the DAO family. The cofactor is FAD.

Its subcellular location is the cytoplasm. It carries out the reaction 5-aminomethyl-2-thiouridine(34) in tRNA + S-adenosyl-L-methionine = 5-methylaminomethyl-2-thiouridine(34) in tRNA + S-adenosyl-L-homocysteine + H(+). In terms of biological role, catalyzes the last two steps in the biosynthesis of 5-methylaminomethyl-2-thiouridine (mnm(5)s(2)U) at the wobble position (U34) in tRNA. Catalyzes the FAD-dependent demodification of cmnm(5)s(2)U34 to nm(5)s(2)U34, followed by the transfer of a methyl group from S-adenosyl-L-methionine to nm(5)s(2)U34, to form mnm(5)s(2)U34. This chain is tRNA 5-methylaminomethyl-2-thiouridine biosynthesis bifunctional protein MnmC, found in Escherichia coli O9:H4 (strain HS).